Here is a 122-residue protein sequence, read N- to C-terminus: Large ribosomal subunit protein uL14 (122 aa).

Belongs to the universal ribosomal protein uL14 family. As to quaternary structure, part of the 50S ribosomal subunit. Forms a cluster with proteins L3 and L19. In the 70S ribosome, L14 and L19 interact and together make contacts with the 16S rRNA in bridges B5 and B8.

Binds to 23S rRNA. Forms part of two intersubunit bridges in the 70S ribosome. The chain is Large ribosomal subunit protein uL14 from Streptomyces coelicolor (strain ATCC BAA-471 / A3(2) / M145).